Consider the following 301-residue polypeptide: Bifunctional dTDP-4-dehydrorhamnose 3,5-epimerase/dTDP-4-dehydrorhamnose reductase (301 aa).

Residues 23 to 24 (WI), 69 to 71 (GVT), and tyrosine 111 each bind NADPH.

The protein belongs to the dTDP-4-dehydrorhamnose reductase family. In terms of tissue distribution, expressed in roots, leaves, stems and flowers.

The catalysed reaction is dTDP-4-dehydro-6-deoxy-alpha-D-glucose = dTDP-4-dehydro-beta-L-rhamnose. The enzyme catalyses dTDP-beta-L-rhamnose + NADP(+) = dTDP-4-dehydro-beta-L-rhamnose + NADPH + H(+). It participates in carbohydrate biosynthesis; dTDP-L-rhamnose biosynthesis. In terms of biological role, bifunctional enzyme involved in dTDP-beta-L-rhamnose biosynthesis. Catalyzes the epimerization of the C3' and C5'positions of dTDP-6-deoxy-4-keto-alpha-D-glucose to form dTDP-4-keto-beta-L-rhamnose and its reduction to yield dTDP-beta-L-rhamnose. Can form UDP-beta-L-rhamnose from UDP-6-deoxy-4-keto-alpha-D-glucose, but cannot convert GDP-4-dehydro-6-deoxy-D-mannose to GDP-fucose. The polypeptide is Bifunctional dTDP-4-dehydrorhamnose 3,5-epimerase/dTDP-4-dehydrorhamnose reductase (Arabidopsis thaliana (Mouse-ear cress)).